The following is a 229-amino-acid chain: Potassium/proton antiporter CemA (229 aa).

3 helical membrane-spanning segments follow: residues 7–27 (FTPL…SFSV), 107–127 (ILHF…SILG), and 189–209 (IISG…KYWI).

It belongs to the CemA family.

It localises to the plastid. The protein localises to the chloroplast inner membrane. The enzyme catalyses K(+)(in) + H(+)(out) = K(+)(out) + H(+)(in). Functionally, contributes to K(+)/H(+) antiport activity by supporting proton efflux to control proton extrusion and homeostasis in chloroplasts in a light-dependent manner to modulate photosynthesis. Prevents excessive induction of non-photochemical quenching (NPQ) under continuous-light conditions. Indirectly promotes efficient inorganic carbon uptake into chloroplasts. This Atropa belladonna (Belladonna) protein is Potassium/proton antiporter CemA.